Here is a 409-residue protein sequence, read N- to C-terminus: Wadjet protein JetD (409 aa).

In terms of biological role, component of antiplasmid transformation system Wadjet type I, composed of JetA, JetB, JetC and JetD. Expression of Wadjet type I in B.subtilis (strain BEST7003) reduces the transformation efficiency of plasmid pHCMC05. The chain is Wadjet protein JetD from Bacillus cereus (strain Q1).